A 40-amino-acid polypeptide reads, in one-letter code: MPTRSTNPNKQPVELNRTSLFLGLLLVFVLGILFSSYFFN.

A helical membrane pass occupies residues 19–39; that stretch reads SLFLGLLLVFVLGILFSSYFF.

The protein belongs to the PsbL family. As to quaternary structure, PSII is composed of 1 copy each of membrane proteins PsbA, PsbB, PsbC, PsbD, PsbE, PsbF, PsbH, PsbI, PsbJ, PsbK, PsbL, PsbM, PsbT, PsbX, PsbY, PsbZ, Psb30/Ycf12, peripheral proteins PsbO, CyanoQ (PsbQ), PsbU, PsbV and a large number of cofactors. It forms dimeric complexes.

Its subcellular location is the cellular thylakoid membrane. Its function is as follows. One of the components of the core complex of photosystem II (PSII). PSII is a light-driven water:plastoquinone oxidoreductase that uses light energy to abstract electrons from H(2)O, generating O(2) and a proton gradient subsequently used for ATP formation. It consists of a core antenna complex that captures photons, and an electron transfer chain that converts photonic excitation into a charge separation. This subunit is found at the monomer-monomer interface and is required for correct PSII assembly and/or dimerization. This Synechococcus elongatus (strain ATCC 33912 / PCC 7942 / FACHB-805) (Anacystis nidulans R2) protein is Photosystem II reaction center protein L.